The primary structure comprises 250 residues: Triosephosphate isomerase (250 aa).

Substrate is bound at residue 9–11 (NWK). The active-site Electrophile is His-96. Glu-168 (proton acceptor) is an active-site residue. Substrate contacts are provided by residues Gly-174, Ser-216, and 237–238 (GG).

It belongs to the triosephosphate isomerase family. In terms of assembly, homodimer.

The protein resides in the cytoplasm. It carries out the reaction D-glyceraldehyde 3-phosphate = dihydroxyacetone phosphate. The protein operates within carbohydrate biosynthesis; gluconeogenesis. It functions in the pathway carbohydrate degradation; glycolysis; D-glyceraldehyde 3-phosphate from glycerone phosphate: step 1/1. Its function is as follows. Involved in the gluconeogenesis. Catalyzes stereospecifically the conversion of dihydroxyacetone phosphate (DHAP) to D-glyceraldehyde-3-phosphate (G3P). In Leptospira interrogans serogroup Icterohaemorrhagiae serovar Lai (strain 56601), this protein is Triosephosphate isomerase.